Here is a 67-residue protein sequence, read N- to C-terminus: Small ribosomal subunit protein bS21 (67 aa).

The protein belongs to the bacterial ribosomal protein bS21 family.

The protein is Small ribosomal subunit protein bS21 of Nitratidesulfovibrio vulgaris (strain DSM 19637 / Miyazaki F) (Desulfovibrio vulgaris).